The sequence spans 321 residues: D-alanine--D-alanine ligase (321 aa).

One can recognise an ATP-grasp domain in the interval 121-315 (RIWFLTNNIN…FTNLIEEIIK (195 aa)). Residue 147-199 (PMKRPYVIKPLTQGSSIGVEVIFAEDDFNFADYDFPYGDQVIIEQYIKGRELQ) coordinates ATP. Residues E268, E282, and N284 each contribute to the Mg(2+) site.

The protein belongs to the D-alanine--D-alanine ligase family. Mg(2+) is required as a cofactor. It depends on Mn(2+) as a cofactor.

Its subcellular location is the cytoplasm. It carries out the reaction 2 D-alanine + ATP = D-alanyl-D-alanine + ADP + phosphate + H(+). The protein operates within cell wall biogenesis; peptidoglycan biosynthesis. Functionally, cell wall formation. The sequence is that of D-alanine--D-alanine ligase from Rickettsia africae (strain ESF-5).